The sequence spans 193 residues: Molybdopterin synthase catalytic subunit (193 aa).

Residues 118–119 (HR), Lys-134, and 141–143 (KKE) contribute to the substrate site. The disordered stretch occupies residues 159-193 (DRTTTDGTTASSPAPATRPAKGGGCCGSKVRANES). Over residues 163–178 (TDGTTASSPAPATRPA) the composition is skewed to low complexity.

This sequence belongs to the MoaE family. MOCS2B subfamily. In terms of assembly, heterotetramer; composed of 2 small (MOCS2A) and 2 large (MOCS2B) subunits.

Its subcellular location is the cytoplasm. It catalyses the reaction 2 [molybdopterin-synthase sulfur-carrier protein]-C-terminal-Gly-aminoethanethioate + cyclic pyranopterin phosphate + H2O = molybdopterin + 2 [molybdopterin-synthase sulfur-carrier protein]-C-terminal Gly-Gly + 2 H(+). It functions in the pathway cofactor biosynthesis; molybdopterin biosynthesis. In terms of biological role, catalytic subunit of the molybdopterin synthase complex, a complex that catalyzes the conversion of precursor Z into molybdopterin. Acts by mediating the incorporation of 2 sulfur atoms from thiocarboxylated MOCS2A into precursor Z to generate a dithiolene group. This is Molybdopterin synthase catalytic subunit from Oryza sativa subsp. indica (Rice).